The sequence spans 173 residues: Probable DNA-directed RNA polymerase subunit delta (173 aa).

Residues 14 to 81 enclose the HTH HARE-type domain; the sequence is LSMIELGVKI…GSGMWGLKRW (68 aa). Residues 86-173 are disordered; it reads QAEEEITEEP…EDENDDDNTR (88 aa). Acidic residues predominate over residues 109–173; the sequence is IDDVDDDLDV…EDENDDDNTR (65 aa).

It belongs to the RpoE family. As to quaternary structure, RNAP is composed of a core of 2 alpha, a beta and a beta' subunits. The core is associated with a delta subunit and one of several sigma factors.

Functionally, participates in both the initiation and recycling phases of transcription. In the presence of the delta subunit, RNAP displays an increased specificity of transcription, a decreased affinity for nucleic acids, and an increased efficiency of RNA synthesis because of enhanced recycling. This Oceanobacillus iheyensis (strain DSM 14371 / CIP 107618 / JCM 11309 / KCTC 3954 / HTE831) protein is Probable DNA-directed RNA polymerase subunit delta.